A 257-amino-acid chain; its full sequence is uncharacterized protein (257 aa).

This is an uncharacterized protein from Mycobacterium tuberculosis (strain CDC 1551 / Oshkosh).